Here is a 390-residue protein sequence, read N- to C-terminus: Curcumin synthase 3 (390 aa).

Cys164 is an active-site residue.

Belongs to the thiolase-like superfamily. Chalcone/stilbene synthases family. Homodimer.

The enzyme catalyses (E)-feruloylacetyl-CoA + (E)-feruloyl-CoA + H2O = curcumin + CO2 + 2 CoA. The catalysed reaction is (E)-feruloylacetyl-CoA + (E)-4-coumaroyl-CoA + H2O = demethoxycurcumin + CO2 + 2 CoA. It carries out the reaction (4-coumaroyl)acetyl-CoA + 4-coumaroyl-CoA + H2O = bisdemethoxycurcumin + CO2 + 2 CoA. It participates in secondary metabolite biosynthesis; flavonoid biosynthesis. In terms of biological role, catalyzes the synthesis of curcumin by condensing feruloyl-CoA with a diketide-CoA in the curcuminoid biosynthesis. Also acts as a demethoxycurcumin synthase by accepting 4-coumaroyl-CoA as a starter substrate instead of feruloyl-CoA. The chain is Curcumin synthase 3 (CURS3) from Curcuma longa (Turmeric).